We begin with the raw amino-acid sequence, 371 residues long: Putative glutamate--cysteine ligase 2 (371 aa).

This sequence belongs to the glutamate--cysteine ligase type 2 family. YbdK subfamily.

It catalyses the reaction L-cysteine + L-glutamate + ATP = gamma-L-glutamyl-L-cysteine + ADP + phosphate + H(+). Its function is as follows. ATP-dependent carboxylate-amine ligase which exhibits weak glutamate--cysteine ligase activity. In Cupriavidus taiwanensis (strain DSM 17343 / BCRC 17206 / CCUG 44338 / CIP 107171 / LMG 19424 / R1) (Ralstonia taiwanensis (strain LMG 19424)), this protein is Putative glutamate--cysteine ligase 2.